The following is an 877-amino-acid chain: DNA polymerase I (877 aa).

One can recognise a 5'-3' exonuclease domain in the interval 180 to 272 (TPSQFIDLKA…GLEDTLLKEK (93 aa)). The region spanning 312-468 (FEIVTDKSSV…AKEKMMAELI (157 aa)) is the 3'-5' exonuclease domain.

It belongs to the DNA polymerase type-A family. In terms of assembly, single-chain monomer with multiple functions.

It carries out the reaction DNA(n) + a 2'-deoxyribonucleoside 5'-triphosphate = DNA(n+1) + diphosphate. In terms of biological role, in addition to polymerase activity, this DNA polymerase exhibits 3'-5' and 5'-3' exonuclease activity. This is DNA polymerase I (polA) from Lactococcus lactis subsp. cremoris (strain MG1363).